Reading from the N-terminus, the 142-residue chain is Large ribosomal subunit protein uL11 (142 aa).

Belongs to the universal ribosomal protein uL11 family. Part of the ribosomal stalk of the 50S ribosomal subunit. Interacts with L10 and the large rRNA to form the base of the stalk. L10 forms an elongated spine to which L12 dimers bind in a sequential fashion forming a multimeric L10(L12)X complex. In terms of processing, one or more lysine residues are methylated.

Its function is as follows. Forms part of the ribosomal stalk which helps the ribosome interact with GTP-bound translation factors. The protein is Large ribosomal subunit protein uL11 of Pasteurella multocida (strain Pm70).